A 576-amino-acid chain; its full sequence is V-type ATP synthase alpha chain (576 aa).

238 to 245 contributes to the ATP binding site; it reads GPFGAGKT.

It belongs to the ATPase alpha/beta chains family.

The catalysed reaction is ATP + H2O + 4 H(+)(in) = ADP + phosphate + 5 H(+)(out). In terms of biological role, produces ATP from ADP in the presence of a proton gradient across the membrane. The V-type alpha chain is a catalytic subunit. The polypeptide is V-type ATP synthase alpha chain (Borrelia turicatae (strain 91E135)).